Reading from the N-terminus, the 166-residue chain is Probable glucosamine 6-phosphate N-acetyltransferase 2 (166 aa).

Residues 21 to 166 form the N-acetyltransferase domain; sequence VQIRRLEATD…EKGVQMAIYF (146 aa). Substrate contacts are provided by residues Ser-43, 93–96, and 105–107; these read KFLR and EDV. 115–120 is a binding site for acetyl-CoA; that stretch reads GRGLGL. Residue 136 to 137 coordinates substrate; sequence YK. Residue 150 to 152 coordinates acetyl-CoA; it reads YAK.

The protein belongs to the acetyltransferase family. GNA1 subfamily. As to quaternary structure, homodimer.

The protein localises to the endoplasmic reticulum membrane. The enzyme catalyses D-glucosamine 6-phosphate + acetyl-CoA = N-acetyl-D-glucosamine 6-phosphate + CoA + H(+). It functions in the pathway nucleotide-sugar biosynthesis; UDP-N-acetyl-alpha-D-glucosamine biosynthesis; N-acetyl-alpha-D-glucosamine 1-phosphate from alpha-D-glucosamine 6-phosphate (route I): step 1/2. Acetyltransferase involved in UDP-N-acetylglucosamine (UDP-GlcNAc) biosynthesis. UDP-GlcNAc is an essential metabolite that serves as an initial sugar donor of N-glycan synthesis and thus plays an important role in protein and lipid glycosylation. The chain is Probable glucosamine 6-phosphate N-acetyltransferase 2 from Oryza sativa subsp. japonica (Rice).